The following is a 473-amino-acid chain: GTPase Der (473 aa).

EngA-type G domains are found at residues 5-170 and 178-351; these read PVVA…PNQE and LKLA…QSSM. GTP-binding positions include 11-18, 58-62, 123-126, 184-191, 231-235, and 296-299; these read GRPNVGKS, DTGGI, NKVD, DTAGV, and NKWD. Positions 352–436 constitute a KH-like domain; the sequence is FEVSTNRLTQ…PLNVVFKLNE (85 aa). Polar residues predominate over residues 438–454; it reads PYANKSDTPTKAKTQQL. The disordered stretch occupies residues 438–473; sequence PYANKSDTPTKAKTQQLRQRERNRAQKFTTKDKKPR. A compositionally biased stretch (basic and acidic residues) spans 455 to 473; the sequence is RQRERNRAQKFTTKDKKPR.

Belongs to the TRAFAC class TrmE-Era-EngA-EngB-Septin-like GTPase superfamily. EngA (Der) GTPase family. As to quaternary structure, associates with the 50S ribosomal subunit.

Functionally, GTPase that plays an essential role in the late steps of ribosome biogenesis. This is GTPase Der from Psychrobacter arcticus (strain DSM 17307 / VKM B-2377 / 273-4).